The primary structure comprises 180 residues: Endoribonuclease YbeY (180 aa).

Histidine 136, histidine 140, and histidine 146 together coordinate Zn(2+).

This sequence belongs to the endoribonuclease YbeY family. It depends on Zn(2+) as a cofactor.

The protein localises to the cytoplasm. Functionally, single strand-specific metallo-endoribonuclease involved in late-stage 70S ribosome quality control and in maturation of the 3' terminus of the 16S rRNA. In Synechococcus sp. (strain CC9902), this protein is Endoribonuclease YbeY.